The following is a 128-amino-acid chain: Phosphoribosyl-AMP cyclohydrolase (128 aa).

D86 lines the Mg(2+) pocket. Residue C87 coordinates Zn(2+). 2 residues coordinate Mg(2+): D88 and D90. The Zn(2+) site is built by C103 and C110.

Belongs to the PRA-CH family. In terms of assembly, homodimer. Mg(2+) serves as cofactor. The cofactor is Zn(2+).

It is found in the cytoplasm. It carries out the reaction 1-(5-phospho-beta-D-ribosyl)-5'-AMP + H2O = 1-(5-phospho-beta-D-ribosyl)-5-[(5-phospho-beta-D-ribosylamino)methylideneamino]imidazole-4-carboxamide. It participates in amino-acid biosynthesis; L-histidine biosynthesis; L-histidine from 5-phospho-alpha-D-ribose 1-diphosphate: step 3/9. In terms of biological role, catalyzes the hydrolysis of the adenine ring of phosphoribosyl-AMP. This is Phosphoribosyl-AMP cyclohydrolase from Roseobacter denitrificans (strain ATCC 33942 / OCh 114) (Erythrobacter sp. (strain OCh 114)).